Reading from the N-terminus, the 252-residue chain is Flagellar L-ring protein (252 aa).

A signal peptide spans methionine 1–glycine 25. Cysteine 26 is lipidated: N-palmitoyl cysteine. Cysteine 26 is lipidated: S-diacylglycerol cysteine.

The protein belongs to the FlgH family. The basal body constitutes a major portion of the flagellar organelle and consists of four rings (L,P,S, and M) mounted on a central rod.

The protein localises to the cell outer membrane. It is found in the bacterial flagellum basal body. In terms of biological role, assembles around the rod to form the L-ring and probably protects the motor/basal body from shearing forces during rotation. The chain is Flagellar L-ring protein from Nitrobacter winogradskyi (strain ATCC 25391 / DSM 10237 / CIP 104748 / NCIMB 11846 / Nb-255).